The following is a 288-amino-acid chain: MTKAQLFGKPLADDVTRGVRAALKEWAGAEPGFQPHLVSVLASEDEASRVYVHSKARQAERLGVRFTARDLGADAKQDELHAVLQALSADADVHGVVLELPLAPGLDADAALRHIAPCKDVEGLTPANLALIAAGREAEALLPPTPRSVRFLLREVLGDDLRGRRVAVIGPGRTVGRPLTFMLNNRGVTVTLCNECTRDLRDVLAPQDAVVVAVGHAGLLRPEQVQPHHVVIDAGINVTPGGVVGDAVPDLPVRAQTPVPGGVGPLTSALMYQNLVRAVKLQRGERVE.

Residues 170–172 (GPG) and Ile-236 each bind NADP(+).

The protein belongs to the tetrahydrofolate dehydrogenase/cyclohydrolase family. In terms of assembly, homodimer.

The enzyme catalyses (6R)-5,10-methylene-5,6,7,8-tetrahydrofolate + NADP(+) = (6R)-5,10-methenyltetrahydrofolate + NADPH. It carries out the reaction (6R)-5,10-methenyltetrahydrofolate + H2O = (6R)-10-formyltetrahydrofolate + H(+). The protein operates within one-carbon metabolism; tetrahydrofolate interconversion. Functionally, catalyzes the oxidation of 5,10-methylenetetrahydrofolate to 5,10-methenyltetrahydrofolate and then the hydrolysis of 5,10-methenyltetrahydrofolate to 10-formyltetrahydrofolate. The sequence is that of Bifunctional protein FolD 1 from Deinococcus geothermalis (strain DSM 11300 / CIP 105573 / AG-3a).